A 997-amino-acid polypeptide reads, in one-letter code: DNA polymerase I (997 aa).

In terms of domain architecture, 5'-3' exonuclease spans 174 to 261; sequence VMPTQLLDLF…VPCVFSLEDS (88 aa). The 162-residue stretch at 428–589 folds into the 3'-5' exonuclease domain; the sequence is VPDVSLHTES…LYHYLKLRLE (162 aa).

It belongs to the DNA polymerase type-A family.

The catalysed reaction is DNA(n) + a 2'-deoxyribonucleoside 5'-triphosphate = DNA(n+1) + diphosphate. Its function is as follows. In addition to polymerase activity, this DNA polymerase exhibits 3'-5' and 5'-3' exonuclease activity. This chain is DNA polymerase I (polA), found in Treponema pallidum (strain Nichols).